We begin with the raw amino-acid sequence, 233 residues long: MAKLQRKRSKALGSSLEMSQIMDAGTNKIKRRIRDLERLLKKKKDILPSTVIIEKERNLQALRLELQNNELKNKIKANAKKYHMVRFFEKKKALRKYNRLLKKIKESGADDKDLQQKLRATKIELCYVINFPKTEKYIALYPNDTPSTDPKGVELTNLRREQFLKLVAERMDANTLNVSFEEILKGKKLDEDSIGLTLSPDKDHEDGSQVSPTQDRKELDQVVGEDEKDDFFE.

Positions Thr26–Ala109 form a coiled coil. The tract at residues Ile194–Glu233 is disordered. A compositionally biased stretch (acidic residues) spans Val223–Glu233.

This sequence belongs to the EFG1 family.

The protein localises to the nucleus. It localises to the nucleolus. Involved in rRNA processing. Required growth at elevated temperatures, resistance to hydroxyurea and for cell cycle progression. The chain is rRNA-processing protein EFG1 (EFG1) from Saccharomyces cerevisiae (strain YJM789) (Baker's yeast).